Here is a 180-residue protein sequence, read N- to C-terminus: Acireductone dioxygenase (180 aa).

His-97, His-99, Glu-103, and His-141 together coordinate Fe(2+). Positions 97, 99, 103, and 141 each coordinate Ni(2+).

Belongs to the acireductone dioxygenase (ARD) family. As to quaternary structure, monomer. It depends on Fe(2+) as a cofactor. The cofactor is Ni(2+).

It carries out the reaction 1,2-dihydroxy-5-(methylsulfanyl)pent-1-en-3-one + O2 = 3-(methylsulfanyl)propanoate + CO + formate + 2 H(+). It catalyses the reaction 1,2-dihydroxy-5-(methylsulfanyl)pent-1-en-3-one + O2 = 4-methylsulfanyl-2-oxobutanoate + formate + 2 H(+). It participates in amino-acid biosynthesis; L-methionine biosynthesis via salvage pathway; L-methionine from S-methyl-5-thio-alpha-D-ribose 1-phosphate: step 5/6. Functionally, catalyzes 2 different reactions between oxygen and the acireductone 1,2-dihydroxy-3-keto-5-methylthiopentene (DHK-MTPene) depending upon the metal bound in the active site. Fe-containing acireductone dioxygenase (Fe-ARD) produces formate and 2-keto-4-methylthiobutyrate (KMTB), the alpha-ketoacid precursor of methionine in the methionine recycle pathway. Ni-containing acireductone dioxygenase (Ni-ARD) produces methylthiopropionate, carbon monoxide and formate, and does not lie on the methionine recycle pathway. The polypeptide is Acireductone dioxygenase (Yersinia enterocolitica serotype O:8 / biotype 1B (strain NCTC 13174 / 8081)).